A 229-amino-acid polypeptide reads, in one-letter code: Putative germin-like protein 12-3 (229 aa).

The signal sequence occupies residues 1–22; sequence MASSNFFLLIPLIALVTTQAMA. Residues Cys32 and Cys47 are joined by a disulfide bond. Residues 62-217 form the Cupin type-1 domain; sequence ANLDKPMDIT…AFQVDKKAVD (156 aa). Asn78 is a glycosylation site (N-linked (GlcNAc...) asparagine). Residues His111, His113, Glu118, and His162 each coordinate Mn(2+).

The protein belongs to the germin family. As to quaternary structure, oligomer (believed to be a pentamer but probably hexamer).

Its subcellular location is the secreted. It is found in the extracellular space. The protein resides in the apoplast. Functionally, may play a role in plant defense. Probably has no oxalate oxidase activity even if the active site is conserved. This Oryza sativa subsp. japonica (Rice) protein is Putative germin-like protein 12-3.